The following is a 444-amino-acid chain: C4-dicarboxylate transport protein (444 aa).

A run of 9 helical transmembrane segments spans residues Pro-17–Gly-37, Leu-57–Met-77, Leu-92–Val-112, Glu-139–Ala-159, Gly-161–Gly-181, Leu-201–Ile-221, Met-234–Val-254, Ile-320–Gly-340, and Ala-368–Ile-388.

It belongs to the dicarboxylate/amino acid:cation symporter (DAACS) (TC 2.A.23) family.

Its subcellular location is the cell inner membrane. Responsible for the transport of dicarboxylates such as succinate, fumarate, and malate from the periplasm across the membrane. This is C4-dicarboxylate transport protein from Rhizobium johnstonii (strain DSM 114642 / LMG 32736 / 3841) (Rhizobium leguminosarum bv. viciae).